The following is a 769-amino-acid chain: 5-methyltetrahydropteroyltriglutamate--homocysteine methyltransferase (769 aa).

5-methyltetrahydropteroyltri-L-glutamate-binding positions include Arg-16–Lys-19 and Lys-118. L-homocysteine contacts are provided by residues Ile-440 to Ser-442 and Glu-493. L-methionine is bound by residues Ile-440–Ser-442 and Glu-493. 5-methyltetrahydropteroyltri-L-glutamate-binding positions include Arg-524–Cys-525 and Trp-570. Asp-608 contacts L-homocysteine. Asp-608 lines the L-methionine pocket. Glu-614 serves as a coordination point for 5-methyltetrahydropteroyltri-L-glutamate. Positions 650, 652, and 674 each coordinate Zn(2+). His-706 (proton donor) is an active-site residue. Cys-738 contributes to the Zn(2+) binding site.

It belongs to the vitamin-B12 independent methionine synthase family. Zn(2+) serves as cofactor.

The catalysed reaction is 5-methyltetrahydropteroyltri-L-glutamate + L-homocysteine = tetrahydropteroyltri-L-glutamate + L-methionine. It functions in the pathway amino-acid biosynthesis; L-methionine biosynthesis via de novo pathway; L-methionine from L-homocysteine (MetE route): step 1/1. Functionally, catalyzes the transfer of a methyl group from 5-methyltetrahydrofolate to homocysteine resulting in methionine formation. This chain is 5-methyltetrahydropteroyltriglutamate--homocysteine methyltransferase, found in Acidiphilium cryptum (strain JF-5).